The primary structure comprises 92 residues: Non-specific lipid-transfer protein 1 (92 aa).

4 disulfide bridges follow: cysteine 4–cysteine 52, cysteine 14–cysteine 28, cysteine 29–cysteine 74, and cysteine 50–cysteine 88.

This sequence belongs to the plant LTP family. In terms of tissue distribution, expressed in seeds and, at very low levels, in pulp of fruit (at protein level).

Functionally, plant non-specific lipid-transfer proteins transfer phospholipids as well as galactolipids across membranes. May play a role in wax or cutin deposition in the cell walls of expanding epidermal cells and certain secretory tissues. The chain is Non-specific lipid-transfer protein 1 from Actinidia deliciosa (Kiwi).